Here is a 2481-residue protein sequence, read N- to C-terminus: Tetratricopeptide repeat protein 28 (2481 aa).

At Met1 the chain carries N-acetylmethionine. Pro residues predominate over residues 1-14 (MEQSPPPAPEPTQG). The interval 1–48 (MEQSPPPAPEPTQGPTPARSRRRREPESPPASAPIPLFGADTIGQRSP) is disordered. Ser28 is modified (phosphoserine). TPR repeat units follow at residues 58–91 (FVEK…DPQN), 93–125 (ILYS…NPKW), 126–159 (PKAY…DPKS), 196–229 (FVVV…GTCS), 234–267 (GSVF…AKTL), 274–307 (CRAH…AMKL), 314–347 (SSAL…AKQS), 354–387 (AREL…AKDL), 394–427 (ARAY…AQEL), 434–467 (MRAY…AEDL), 474–507 (GRAS…AQEL), 514–547 (GRAY…SMEV), 554–587 (ASTH…AREL), 594–627 (ARAL…APDL), 634–667 (GKVC…AKDL), 674–707 (AKAY…AQSL), 714–747 (FRAL…AHQV), 754–787 (ASAY…YQEL), 794–827 (CRAH…GQKL), 834–867 (AQVY…LQQL), 877–910 (GRAY…AQSL), 917–950 (AKAY…AHEL), 957–990 (AQAY…ARDM), 997–1030 (SDAA…AEET), 1037–1070 (GRAY…AAQM), 1077–1110 (TVSY…AEQL), 1117–1150 (AKIR…FETI), and 1169–1202 (TSSY…AFAD). Position 1590 is a phosphoserine (Ser1590). Disordered regions lie at residues 2004–2055 (FVSK…DEEE), 2075–2161 (NTCF…DPQE), and 2176–2339 (AVER…PADA). Polar residues-rich tracts occupy residues 2029–2043 (AYLQ…QLPP) and 2096–2122 (SVSS…NSPF). A Phosphoserine modification is found at Ser2104. A compositionally biased stretch (low complexity) spans 2130-2146 (SSDTGESDQSSTETDST). A compositionally biased stretch (basic and acidic residues) spans 2149-2159 (SQEESNPKLDP). Residues 2183–2214 (SGGQVSKSNNPEDGVQAPSSTAVFRASETSAF) are compositionally biased toward polar residues. A phosphoserine mark is found at Ser2224 and Ser2251. Residues 2238 to 2282 (RSSSLPKVSSGYSSPTTSEMSIKDSPSQHSGRPSPGCDSQTSQLD) show a composition bias toward polar residues. A compositionally biased stretch (low complexity) spans 2307–2339 (SPSSGHQSPAGSAPSPALSYSSAGSARSSPADA). Ser2393 and Ser2398 each carry phosphoserine. The interval 2420–2467 (QHDGAPPKAPPNGHWRTETTSLGSLPLPAGPPATAPARPLRLPSGNGY) is disordered.

Interacts with AURKB. As to expression, widely expressed in fetal tissues. In adult tissues, expressed in testis and ovary and, at much lower levels, in kidney and pancreas.

The protein localises to the cytoplasm. It localises to the cytoskeleton. It is found in the microtubule organizing center. The protein resides in the centrosome. Its subcellular location is the spindle. The protein localises to the spindle pole. It localises to the midbody. In terms of biological role, during mitosis, may be involved in the condensation of spindle midzone microtubules, leading to the formation of midbody. The chain is Tetratricopeptide repeat protein 28 (TTC28) from Homo sapiens (Human).